The following is a 216-amino-acid chain: Imidazole glycerol phosphate synthase subunit HisH (216 aa).

Positions Arg2 to Pro216 constitute a Glutamine amidotransferase type-1 domain. The active-site Nucleophile is Cys88. Catalysis depends on residues His196 and Glu198.

As to quaternary structure, heterodimer of HisH and HisF.

It is found in the cytoplasm. The enzyme catalyses 5-[(5-phospho-1-deoxy-D-ribulos-1-ylimino)methylamino]-1-(5-phospho-beta-D-ribosyl)imidazole-4-carboxamide + L-glutamine = D-erythro-1-(imidazol-4-yl)glycerol 3-phosphate + 5-amino-1-(5-phospho-beta-D-ribosyl)imidazole-4-carboxamide + L-glutamate + H(+). It carries out the reaction L-glutamine + H2O = L-glutamate + NH4(+). It functions in the pathway amino-acid biosynthesis; L-histidine biosynthesis; L-histidine from 5-phospho-alpha-D-ribose 1-diphosphate: step 5/9. Functionally, IGPS catalyzes the conversion of PRFAR and glutamine to IGP, AICAR and glutamate. The HisH subunit catalyzes the hydrolysis of glutamine to glutamate and ammonia as part of the synthesis of IGP and AICAR. The resulting ammonia molecule is channeled to the active site of HisF. The sequence is that of Imidazole glycerol phosphate synthase subunit HisH from Brucella abortus biovar 1 (strain 9-941).